Reading from the N-terminus, the 198-residue chain is MAVADPIARLVKELAKLPGIGEKTAQRLAFHILKAGPGYAGELAGAIAGVVRDVRLCSECQTLTDKDPCAVCADPRRDSRIICVVEGVPDLLAVERTHEFRGRYHVLHGALSPLDGIGPSELKIRELLLRLEREPAEEIVVATNPDVEGEATALYLTKLLKPLGVKVTRIAQGIPMGGDLEYADQVTLARALAGRREL.

The segment at cysteine 57–cysteine 72 adopts a C4-type zinc-finger fold. Residues arginine 80–proline 175 form the Toprim domain.

The protein belongs to the RecR family.

May play a role in DNA repair. It seems to be involved in an RecBC-independent recombinational process of DNA repair. It may act with RecF and RecO. The protein is Recombination protein RecR of Anaeromyxobacter sp. (strain Fw109-5).